The primary structure comprises 571 residues: Optineurin (571 aa).

Disordered regions lie at residues 1 to 32 and 100 to 144; these read MSHQ…HPNL and LSHE…DQLR. A coiled-coil region spans residues 38 to 170; the sequence is EELLQQMKEL…VSELQLKLNS (133 aa). The interval 58 to 209 is interaction with Rab8; sequence MKLNNQAMKG…GPTRTVSIGT (152 aa). Positions 100-143 are enriched in basic and acidic residues; it reads LSHENEKLKEELGKLKGKSERSSEDPTDDSRLPRAEAEQEKDQL. The short motif at 176-181 is the LIR element; that stretch reads DSFVEI. Ser177 carries the phosphoserine; by TBK1 modification. The span at 186 to 197 shows a compositional bias: basic and acidic residues; sequence GEAEGSVKEIKH. 2 disordered regions span residues 186-210 and 255-291; these read GEAE…IGTS and VSDF…TVGS. Ser198 is modified (phosphoserine). Over residues 201–210 the composition is skewed to polar residues; the sequence is PTRTVSIGTS. The stretch at 233-502 forms a coiled coil; the sequence is CLREGNQKVE…LLKENDAFED (270 aa). Basic and acidic residues-rich tracts occupy residues 255–268 and 275–286; these read VSDF…RSEI and STEKENEEEKGP. Position 336 is a phosphoserine (Ser336). The tract at residues 405 to 571 is interaction with HD; it reads TRKESEKVDR…LQIHVMDCII (167 aa). The tract at residues 406-514 is interaction with MYO6; it reads RKESEKVDRA…RQSLMEMQSR (109 aa). The UBAN signature appears at 468 to 473; sequence DFHAER. Ser520 bears the Phosphoserine mark. The CCHC NOA-type zinc-finger motif lies at 541-571; it reads QRNIPIHSCPKCGEVLPDIDTLQIHVMDCII. Zn(2+)-binding residues include Cys549, Cys552, His565, and Cys569.

Self-associates. Interacts with HD. Interacts with GTF3A. Interacts with MYO6. Interacts (via UBAN) with ubiquitinated TFRC. Interacts with GTP-bound Rab8 (RAB8A and/or RAB8B). Interacts with TBC1D17. Interacts with TBK1. Interacts with TRAF3. Binds to linear ubiquitin chains. Interacts with LC3 family members MAP1LC3A, MAP1LC3B, GABARAP, GABARAPL1 and GABARAPL2; OPTN phosphorylation increases the association (at least with MAP1LC3B). Interacts with RAB12; the interaction may be indirect. Interacts with TBK1; this interaction leads to the Golgi localization of TBK1 and its subsequent activation. Interacts with palmitoyltransferase ZDHHC17/HIP14; the interaction does not lead to palmitoylation of OPTN. Interacts with CYLD. Interacts with TOM1; the interaction is indirect and is mediated by MYO6, which acts as a bridge between TOM1 and OPTN. Interacts with USP12; the interaction is independent of USP12 deubiquitinase activity and may be involved in regulation of autophagic flux. Post-translationally, phosphorylated by TBK1, leading to restrict bacterial proliferation in case of infection. As to expression, present in aqueous humor of the eye (at protein level).

It localises to the cytoplasm. Its subcellular location is the perinuclear region. The protein localises to the golgi apparatus. The protein resides in the trans-Golgi network. It is found in the cytoplasmic vesicle. It localises to the autophagosome. Its subcellular location is the recycling endosome. In terms of biological role, plays an important role in the maintenance of the Golgi complex, in membrane trafficking, in exocytosis, through its interaction with myosin VI and Rab8. Links myosin VI to the Golgi complex and plays an important role in Golgi ribbon formation. Negatively regulates the induction of IFNB in response to RNA virus infection. Plays a neuroprotective role in the eye and optic nerve. Probably part of the TNF-alpha signaling pathway that can shift the equilibrium toward induction of cell death. May act by regulating membrane trafficking and cellular morphogenesis via a complex that contains Rab8 and huntingtin (HD). Mediates the interaction of Rab8 with the probable GTPase-activating protein TBC1D17 during Rab8-mediated endocytic trafficking, such as that of transferrin receptor (TFRC/TfR); regulates Rab8 recruitment to tubules emanating from the endocytic recycling compartment. Autophagy receptor that interacts directly with both the cargo to become degraded and an autophagy modifier of the MAP1 LC3 family; targets ubiquitin-coated bacteria (xenophagy) and appears to function in the same pathway as SQSTM1 and CALCOCO2/NDP52. This chain is Optineurin (OPTN), found in Macaca mulatta (Rhesus macaque).